A 127-amino-acid polypeptide reads, in one-letter code: Major sperm protein 38 (127 aa).

Ala-2 is modified (N-acetylalanine). In terms of domain architecture, MSP spans 9–126 (DIQTQPGTKI…RRKNLPIEYN (118 aa)).

As to expression, sperm.

It localises to the cell projection. It is found in the pseudopodium. Its subcellular location is the cytoplasm. The protein resides in the cytoskeleton. In terms of biological role, central component in molecular interactions underlying sperm crawling. Forms an extensive filament system that extends from sperm villipoda, along the leading edge of the pseudopod. The sequence is that of Major sperm protein 38 (msp-38) from Caenorhabditis elegans.